The chain runs to 409 residues: Argininosuccinate synthase (409 aa).

ATP contacts are provided by residues 12-20 (AYSGGLDTS) and Ala39. The L-citrulline site is built by Tyr90 and Ser95. Gly120 contacts ATP. L-aspartate-binding residues include Thr122, Asn126, and Asp127. Asn126 is a binding site for L-citrulline. Residues Arg130, Ser181, Ser190, Glu266, and Tyr278 each contribute to the L-citrulline site.

It belongs to the argininosuccinate synthase family. Type 1 subfamily. As to quaternary structure, homotetramer.

The protein localises to the cytoplasm. It carries out the reaction L-citrulline + L-aspartate + ATP = 2-(N(omega)-L-arginino)succinate + AMP + diphosphate + H(+). The protein operates within amino-acid biosynthesis; L-arginine biosynthesis; L-arginine from L-ornithine and carbamoyl phosphate: step 2/3. This chain is Argininosuccinate synthase, found in Gluconacetobacter diazotrophicus (strain ATCC 49037 / DSM 5601 / CCUG 37298 / CIP 103539 / LMG 7603 / PAl5).